The following is a 621-amino-acid chain: Membrane protein insertase YidC (621 aa).

6 consecutive transmembrane segments (helical) span residues 1–21 (MDKN…GFSI), 363–383 (GWGL…KVLV), 436–456 (MGGC…FFFV), 486–506 (IPLL…TNIL), 527–547 (LMMY…SSGL), and 549–569 (YYYF…RKTT).

It belongs to the OXA1/ALB3/YidC family. Type 1 subfamily. Interacts with the Sec translocase complex via SecD. Specifically interacts with transmembrane segments of nascent integral membrane proteins during membrane integration.

The protein localises to the cell inner membrane. Functionally, required for the insertion and/or proper folding and/or complex formation of integral membrane proteins into the membrane. Involved in integration of membrane proteins that insert both dependently and independently of the Sec translocase complex, as well as at least some lipoproteins. Aids folding of multispanning membrane proteins. In Phocaeicola vulgatus (strain ATCC 8482 / DSM 1447 / JCM 5826 / CCUG 4940 / NBRC 14291 / NCTC 11154) (Bacteroides vulgatus), this protein is Membrane protein insertase YidC.